A 142-amino-acid polypeptide reads, in one-letter code: Hemoglobin subunit alpha-1 (142 aa).

The Globin domain maps to 2–142 (KLSADDKHNV…VGYVLASKYR (141 aa)). His-59 lines the O2 pocket. Residue His-88 participates in heme b binding.

It belongs to the globin family. Major hemoglobin is a heterotetramer of two alpha-1 chains and two beta-1 chains. In terms of tissue distribution, red blood cells.

Functionally, involved in oxygen transport from the lung to the various peripheral tissues. This Triturus cristatus (Great crested newt) protein is Hemoglobin subunit alpha-1.